Reading from the N-terminus, the 221-residue chain is DNA repair and recombination protein RadB (221 aa).

This sequence belongs to the eukaryotic RecA-like protein family. RadB subfamily.

Involved in DNA repair and in homologous recombination. May regulate the cleavage reactions of the branch-structured DNA. Has a very weak ATPase activity that is not stimulated by DNA. Binds DNA but does not promote DNA strands exchange. This Thermococcus gammatolerans (strain DSM 15229 / JCM 11827 / EJ3) protein is DNA repair and recombination protein RadB.